The sequence spans 178 residues: Peptide deformylase (178 aa).

Fe cation is bound by residues cysteine 102 and histidine 144. Glutamate 145 is a catalytic residue. Histidine 148 contributes to the Fe cation binding site.

The protein belongs to the polypeptide deformylase family. The cofactor is Fe(2+).

It catalyses the reaction N-terminal N-formyl-L-methionyl-[peptide] + H2O = N-terminal L-methionyl-[peptide] + formate. Its function is as follows. Removes the formyl group from the N-terminal Met of newly synthesized proteins. Requires at least a dipeptide for an efficient rate of reaction. N-terminal L-methionine is a prerequisite for activity but the enzyme has broad specificity at other positions. In Leptospira interrogans serogroup Icterohaemorrhagiae serovar copenhageni (strain Fiocruz L1-130), this protein is Peptide deformylase.